Reading from the N-terminus, the 284-residue chain is Tropomyosin (284 aa).

The segment at 1-38 (MEAIKKKMQAMKLEKDNAVDRAETAEQQSREAALRAEK) is disordered. Residues 1-284 (MEAIKKKMQA…DQTFSELTGY (284 aa)) are a coiled coil. Residues 12–38 (KLEKDNAVDRAETAEQQSREAALRAEK) are compositionally biased toward basic and acidic residues.

Belongs to the tropomyosin family. As to quaternary structure, homodimer.

In terms of biological role, tropomyosin, in association with the troponin complex, plays a central role in the calcium dependent regulation of muscle contraction. In Rhipicephalus microplus (Cattle tick), this protein is Tropomyosin.